Here is a 246-residue protein sequence, read N- to C-terminus: NAD-dependent protein deacylase (246 aa).

In terms of domain architecture, Deacetylase sirtuin-type spans 2-246 (PTAVSDAAAP…AGVCLPAMLA (245 aa)). 29–49 (GAGVSAESGVPTFRDALTGLW) contributes to the NAD(+) binding site. The substrate site is built by tyrosine 74 and arginine 77. NAD(+) is bound at residue 107-110 (QNVD). Residue histidine 125 is the Proton acceptor of the active site. Residues cysteine 137, cysteine 140, cysteine 153, and cysteine 156 each coordinate Zn(2+). Residues 193-195 (GTS), 219-221 (NPE), and alanine 237 each bind NAD(+).

This sequence belongs to the sirtuin family. Class III subfamily. Zn(2+) serves as cofactor.

Its subcellular location is the cytoplasm. The catalysed reaction is N(6)-acetyl-L-lysyl-[protein] + NAD(+) + H2O = 2''-O-acetyl-ADP-D-ribose + nicotinamide + L-lysyl-[protein]. It carries out the reaction N(6)-succinyl-L-lysyl-[protein] + NAD(+) + H2O = 2''-O-succinyl-ADP-D-ribose + nicotinamide + L-lysyl-[protein]. NAD-dependent lysine deacetylase and desuccinylase that specifically removes acetyl and succinyl groups on target proteins. Modulates the activities of several proteins which are inactive in their acylated form. The polypeptide is NAD-dependent protein deacylase (Ralstonia nicotianae (strain ATCC BAA-1114 / GMI1000) (Ralstonia solanacearum)).